A 264-amino-acid chain; its full sequence is Thymidylate synthase (264 aa).

R21 contributes to the dUMP binding site. (6R)-5,10-methylene-5,6,7,8-tetrahydrofolate is bound at residue H51. 126–127 (RR) serves as a coordination point for dUMP. Residue C146 is the Nucleophile of the active site. Residues 166 to 169 (RSVD), N177, and 207 to 209 (HLY) contribute to the dUMP site. D169 serves as a coordination point for (6R)-5,10-methylene-5,6,7,8-tetrahydrofolate. A263 contributes to the (6R)-5,10-methylene-5,6,7,8-tetrahydrofolate binding site.

It belongs to the thymidylate synthase family. Bacterial-type ThyA subfamily. Homodimer.

It is found in the cytoplasm. It catalyses the reaction dUMP + (6R)-5,10-methylene-5,6,7,8-tetrahydrofolate = 7,8-dihydrofolate + dTMP. It participates in pyrimidine metabolism; dTTP biosynthesis. Catalyzes the reductive methylation of 2'-deoxyuridine-5'-monophosphate (dUMP) to 2'-deoxythymidine-5'-monophosphate (dTMP) while utilizing 5,10-methylenetetrahydrofolate (mTHF) as the methyl donor and reductant in the reaction, yielding dihydrofolate (DHF) as a by-product. This enzymatic reaction provides an intracellular de novo source of dTMP, an essential precursor for DNA biosynthesis. The protein is Thymidylate synthase of Geobacillus sp. (strain WCH70).